We begin with the raw amino-acid sequence, 488 residues long: MVEQAQGSLEEIERQFLDVAQRDGLESLQEDVKPDVKSDLNGNGEEKRDRDDEDRKKRKRSRSRDRGDRDRKRSRSRDRRDRDRSRSRERRRDRSRDRNRDDRRGGRDDDRRREPQEPAKPREPKKYRFWDVPPTGFENITPMEYKNMQASGAVPRGSVQSAVPVVGPSVTCQSRRLYVGNIPFGCNEEAMLDFFNQQMHLCNLAQAPGNPILLCQINLDKNFAFIEFRSIDETTAGMAFDGINFMGQQLKVRRPRDYQPSQNTFDMNARMPVSSIVVDSANKIFIGGLPNYLTEDQVKELLCSFGPLKAFSLNVDSQGNSKGYAFAEYLDPTLTDQAIAGLNGMQLGDKQLVVQLACANQTRHNTHLPNSASAIAGIDLSQGAGRATEILCLMNMVTEDELRSDEDYEEILEDVREECSKYGIVRSLEIPRPYDDHPVPGVGKVFVEFATTSDCQRAQAALTGRKFANRTVVTSYYDVDKYHNRQFN.

Basic and acidic residues-rich tracts occupy residues 25 to 55 and 78 to 129; these read LESL…DEDR and DRRD…KYRF. Residues 25 to 133 form a disordered region; sequence LESLQEDVKP…PKKYRFWDVP (109 aa). 3 RRM domains span residues 175–257, 282–359, and 389–479; these read RRLY…RPRD, NKIF…LACA, and EILC…YYDV.

It belongs to the splicing factor SR family. In terms of assembly, forms a heterodimer with the U2AF small subunit.

The protein localises to the nucleus. Functionally, necessary for the splicing of pre-mRNA. Binds to the polypyrimidine tract of introns early during spliceosome assembly. The protein is Splicing factor U2AF 65 kDa subunit (uaf-1) of Caenorhabditis briggsae.